Here is an 89-residue protein sequence, read N- to C-terminus: Small ribosomal subunit protein uS15 (89 aa).

Positions 1 to 25 (MSLDTTEKQQLINTHQTHGTDTGSA) are disordered. Residues 8 to 25 (KQQLINTHQTHGTDTGSA) show a composition bias toward polar residues.

The protein belongs to the universal ribosomal protein uS15 family. As to quaternary structure, part of the 30S ribosomal subunit. Forms a bridge to the 50S subunit in the 70S ribosome, contacting the 23S rRNA.

One of the primary rRNA binding proteins, it binds directly to 16S rRNA where it helps nucleate assembly of the platform of the 30S subunit by binding and bridging several RNA helices of the 16S rRNA. In terms of biological role, forms an intersubunit bridge (bridge B4) with the 23S rRNA of the 50S subunit in the ribosome. The chain is Small ribosomal subunit protein uS15 from Synechococcus sp. (strain CC9902).